Reading from the N-terminus, the 420-residue chain is Na(+)/H(+) antiporter NhaA (420 aa).

The next 11 helical transmembrane spans lie at 4 to 24 (VWNFITGYSLLLIGGAIIALI), 70 to 90 (DLLMALFFAIAAKEVWEAVIL), 104 to 124 (LVATLGGMVGPISIYLGIAYF), 132 to 152 (AVANGWAIPTATDIAFSYLVG), 165 to 185 (FLLLLAIADDAAGLLILAIFY), 192 to 212 (PAWLLLSFGAALGVYVLANWL), 233 to 250 (LSFWPYALAGCASWYGFM), 299 to 319 (VEIILGLFGLMNAGVAFSAMG), 323 to 343 (WLVLAGLLIGKPVGIFLFGWL), 361 to 381 (LVVIGCVAAIGFTVSLFVASV), and 395 to 415 (GALFSFGAAAVSIIVGKLTQV).

The protein belongs to the NhaA Na(+)/H(+) (TC 2.A.33) antiporter family.

The protein localises to the cell inner membrane. It carries out the reaction Na(+)(in) + 2 H(+)(out) = Na(+)(out) + 2 H(+)(in). Functionally, na(+)/H(+) antiporter that extrudes sodium in exchange for external protons. This is Na(+)/H(+) antiporter NhaA from Jannaschia sp. (strain CCS1).